Reading from the N-terminus, the 489-residue chain is Rhamnulokinase (489 aa).

13 to 17 (ASSGR) contacts ATP. C68 and C222 are oxidised to a cystine. Substrate-binding positions include G83 and 236-238 (HDT). D237 functions as the Proton acceptor in the catalytic mechanism. T259 is a binding site for ATP. N296 contacts substrate. Q304 lines the ATP pocket. C353 and C370 are oxidised to a cystine. G402 contributes to the ATP binding site. A disulfide bridge links C413 with C417.

The protein belongs to the rhamnulokinase family. As to quaternary structure, monomer. Mg(2+) is required as a cofactor.

It catalyses the reaction L-rhamnulose + ATP = L-rhamnulose 1-phosphate + ADP + H(+). It functions in the pathway carbohydrate degradation; L-rhamnose degradation; glycerone phosphate from L-rhamnose: step 2/3. Its function is as follows. Involved in the catabolism of L-rhamnose (6-deoxy-L-mannose). Catalyzes the transfer of the gamma-phosphate group from ATP to the 1-hydroxyl group of L-rhamnulose to yield L-rhamnulose 1-phosphate. This is Rhamnulokinase from Escherichia coli O127:H6 (strain E2348/69 / EPEC).